We begin with the raw amino-acid sequence, 603 residues long: Aspartate--tRNA(Asp/Asn) ligase (603 aa).

An L-aspartate-binding site is contributed by glutamate 187. The aspartate stretch occupies residues 211 to 214; sequence QQFK. Residues arginine 233 and histidine 461 each coordinate L-aspartate. An ATP-binding site is contributed by 233–235; it reads RDE. Glutamate 495 contributes to the ATP binding site. Residue arginine 502 coordinates L-aspartate. 547–550 lines the ATP pocket; it reads GLDR.

Belongs to the class-II aminoacyl-tRNA synthetase family. Type 1 subfamily. As to quaternary structure, homodimer.

Its subcellular location is the cytoplasm. It carries out the reaction tRNA(Asx) + L-aspartate + ATP = L-aspartyl-tRNA(Asx) + AMP + diphosphate. Its function is as follows. Aspartyl-tRNA synthetase with relaxed tRNA specificity since it is able to aspartylate not only its cognate tRNA(Asp) but also tRNA(Asn). Reaction proceeds in two steps: L-aspartate is first activated by ATP to form Asp-AMP and then transferred to the acceptor end of tRNA(Asp/Asn). The protein is Aspartate--tRNA(Asp/Asn) ligase of Chlorobaculum parvum (strain DSM 263 / NCIMB 8327) (Chlorobium vibrioforme subsp. thiosulfatophilum).